We begin with the raw amino-acid sequence, 394 residues long: Obg-like ATPase 1 (394 aa).

The region spanning L25–C282 is the OBG-type G domain. Residues N34 to T39, F56 to D60, and D94 to G97 each bind ATP. Positions 38 and 58 each coordinate Mg(2+). F129 contacts GTP. Residues N230 to M231, M231, and S263 to A265 contribute to the ATP site. S263–A265 is a binding site for GTP. The TGS domain occupies H303–F386.

This sequence belongs to the TRAFAC class OBG-HflX-like GTPase superfamily. OBG GTPase family. YchF/OLA1 subfamily. In terms of assembly, monomer (Potential). Interacts with GAP1. Mg(2+) serves as cofactor.

It is found in the cytoplasm. Its subcellular location is the cell membrane. The protein localises to the cytosol. Its activity is regulated as follows. Activated by GAP1. Functionally, hydrolyzes ATP, and can also hydrolyze GTP with lower efficiency. Has lower affinity for GTP (Potential). Exhibits GTPase activity. Exhibits similar binding affinities and hydrolytic activities toward both GTP and ATP. Binds to the 26 S ribosomal RNA in vitro, but not to the 5.8 S or 18 S rRNA. Confers sensitivity to salinity stress by suppressing the anti-oxidation enzymatic activities and increasing lipid peroxidation thus leading to the accumulation of reactive oxygen species (ROS). In Oryza sativa subsp. indica (Rice), this protein is Obg-like ATPase 1.